Here is a 222-residue protein sequence, read N- to C-terminus: 7-cyano-7-deazaguanine synthase (222 aa).

Position 11 to 21 (11 to 21) interacts with ATP; that stretch reads FSGGQDSTTCL. Zn(2+)-binding residues include cysteine 187, cysteine 195, cysteine 198, and cysteine 201.

This sequence belongs to the QueC family. Zn(2+) is required as a cofactor.

The catalysed reaction is 7-carboxy-7-deazaguanine + NH4(+) + ATP = 7-cyano-7-deazaguanine + ADP + phosphate + H2O + H(+). It participates in purine metabolism; 7-cyano-7-deazaguanine biosynthesis. Functionally, catalyzes the ATP-dependent conversion of 7-carboxy-7-deazaguanine (CDG) to 7-cyano-7-deazaguanine (preQ(0)). This chain is 7-cyano-7-deazaguanine synthase, found in Actinobacillus pleuropneumoniae serotype 5b (strain L20).